Consider the following 324-residue polypeptide: uncharacterized protein (324 aa).

One can recognise an HTH lysR-type domain in the interval 1–58 (MDIKVMEYAAEIARRQSFTKAAEHLHIAQPSLSQQIKKLEAELGLTLFHRSHGSVTLT). Residues 18-37 (FTKAAEHLHIAQPSLSQQIK) constitute a DNA-binding region (H-T-H motif).

The protein belongs to the LysR transcriptional regulatory family.

This is an uncharacterized protein from Bacillus subtilis (strain 168).